The following is a 174-amino-acid chain: N5-carboxyaminoimidazole ribonucleotide mutase (174 aa).

S15, D18, and R45 together coordinate substrate.

This sequence belongs to the AIR carboxylase family. Class I subfamily.

It catalyses the reaction 5-carboxyamino-1-(5-phospho-D-ribosyl)imidazole + H(+) = 5-amino-1-(5-phospho-D-ribosyl)imidazole-4-carboxylate. It participates in purine metabolism; IMP biosynthesis via de novo pathway; 5-amino-1-(5-phospho-D-ribosyl)imidazole-4-carboxylate from 5-amino-1-(5-phospho-D-ribosyl)imidazole (N5-CAIR route): step 2/2. In terms of biological role, catalyzes the conversion of N5-carboxyaminoimidazole ribonucleotide (N5-CAIR) to 4-carboxy-5-aminoimidazole ribonucleotide (CAIR). This chain is N5-carboxyaminoimidazole ribonucleotide mutase, found in Pyrococcus abyssi (strain GE5 / Orsay).